Reading from the N-terminus, the 372-residue chain is Aminodeoxyfutalosine synthase (372 aa).

Residues 53 to 292 enclose the Radical SAM core domain; sequence HKTYFVHSIR…VARLYLDNFP (240 aa). Residues Cys69, Cys73, and Cys76 each coordinate [4Fe-4S] cluster.

This sequence belongs to the radical SAM superfamily. MqnE family. The cofactor is [4Fe-4S] cluster.

The catalysed reaction is 3-[(1-carboxyvinyl)-oxy]benzoate + S-adenosyl-L-methionine + H2O = 6-amino-6-deoxyfutalosine + hydrogencarbonate + L-methionine + H(+). It participates in quinol/quinone metabolism; menaquinone biosynthesis. In terms of biological role, radical SAM enzyme that catalyzes the addition of the adenosyl radical to the double bond of 3-[(1-carboxyvinyl)oxy]benzoate, leading to aminodeoxyfutalosine (AFL), a key intermediate in the formation of menaquinone (MK, vitamin K2) from chorismate. The protein is Aminodeoxyfutalosine synthase of Thermus thermophilus (strain ATCC 27634 / DSM 579 / HB8).